A 370-amino-acid polypeptide reads, in one-letter code: Actin-related protein 2/3 complex subunit 1A-A (370 aa).

WD repeat units follow at residues 6 to 45 (FLLE…WVKG), 50 to 89 (EHNG…WKPT), 140 to 179 (PIRS…VDEK), 202 to 241 (SSGG…SVSQ), 244 to 284 (TEFL…TFVS), and 322 to 365 (LHQN…SYIQ).

Belongs to the WD repeat ARPC1 family. Component of the Arp2/3 complex.

Its subcellular location is the cytoplasm. It localises to the cytoskeleton. The protein localises to the nucleus. Functionally, probably functions as a component of the Arp2/3 complex which is involved in regulation of actin polymerization and together with an activating nucleation-promoting factor (NPF) mediates the formation of branched actin networks. In addition to its role in the cytoplasmic cytoskeleton, the Arp2/3 complex also promotes actin polymerization in the nucleus, thereby regulating gene transcription and repair of damaged DNA. The sequence is that of Actin-related protein 2/3 complex subunit 1A-A (arpc1a-a) from Xenopus laevis (African clawed frog).